A 392-amino-acid polypeptide reads, in one-letter code: MASKRHVGLNIRKKDEPKAAPIRVSSVFGDDDDDDNVPATATNMASASVIRVQKAAEREHQKAEAEDPTIFDYDGNYDEIQAIKNEKKEEARKADKNRESKYAENIIKAHARRQLEQFSREERQQLREREKEGDEFDDKEVFVTGAYRKQQEEVKKHREQEAEEAAFNDMTSVQKQKLWEIGMGRTLLNDLARDPTAIKQRKKEQKNVRKREDSDEEIDPKPEKSDKKPAEKLKKSIYSDDSDEEKAPKPPQKNFEGDLKPGLNTVSKKKATTHAERIRQRNYTPTPPSSDDEGARAPRARRRTSSPSPTSRKSIESRESGSRRSPEGKSEKSEKAPKISLKDKLKPKKIDKEARLDGLKEILKQRNTEEDIEAARQRYFERKEQGIVVPPL.

3 disordered regions span residues 1-73 (MASK…IFDY), 113-169 (RQLE…AFND), and 187-357 (LLND…ARLD). Basic and acidic residues-rich tracts occupy residues 54–65 (KAAEREHQKAEA), 113–132 (RQLE…REKE), 149–160 (KQQEEVKKHREQ), 205–238 (QKNV…KSIY), and 313–357 (KSIE…ARLD). Residues 76-132 (NYDEIQAIKNEKKEEARKADKNRESKYAENIIKAHARRQLEQFSREERQQLREREKE) are a coiled coil.

Belongs to the NSRP1 family. Expressed in the intestine, nervous system and head neurons in both larvae and adults. Expressed in the distal tip cell.

Its subcellular location is the cytoplasm. It is found in the nucleus. Functionally, required for the cessation of distal tip cell migration at the end of larval morphogenesis. The protein is Nuclear speckle splicing regulatory protein 1 homolog (ccdc-55) of Caenorhabditis elegans.